Here is a 254-residue protein sequence, read N- to C-terminus: MTLEKILREKKKDKDILLMTHIVLGYPSFAANREVIEQMVKNGVDCIEMQIPFSEPMADGPVILKANQESLARGTRVAQCFDFAREMTRKHQIPFLFMTYYNIVFKYGEERFFQDAKEAGIKGLIVPDLPPEMGEDYFAYAEQYQLAPIIIYAPTSTPERMKTLAGSATGFIYCAARRGVTGNNSALDENFDNYLSNCRAATTLPLAVGFGIKSKADVQALIGKADMAVIGSQTIRLVDENGPKAVGPFVASLR.

Residues Glu-48 and Asp-59 each act as proton acceptor in the active site.

Belongs to the TrpA family. Tetramer of two alpha and two beta chains.

The enzyme catalyses (1S,2R)-1-C-(indol-3-yl)glycerol 3-phosphate + L-serine = D-glyceraldehyde 3-phosphate + L-tryptophan + H2O. It functions in the pathway amino-acid biosynthesis; L-tryptophan biosynthesis; L-tryptophan from chorismate: step 5/5. Its function is as follows. The alpha subunit is responsible for the aldol cleavage of indoleglycerol phosphate to indole and glyceraldehyde 3-phosphate. This Desulfotalea psychrophila (strain LSv54 / DSM 12343) protein is Tryptophan synthase alpha chain.